We begin with the raw amino-acid sequence, 108 residues long: Tubulin-specific chaperone A (108 aa).

Ala2 is subject to N-acetylalanine.

This sequence belongs to the TBCA family. In terms of assembly, supercomplex made of cofactors A to E. Cofactors A and D function by capturing and stabilizing tubulin in a quasi-native conformation. Cofactor E binds to the cofactor D-tubulin complex; interaction with cofactor C then causes the release of tubulin polypeptides that are committed to the native state.

The protein localises to the cytoplasm. Its subcellular location is the cytoskeleton. Functionally, tubulin-folding protein; involved in the early step of the tubulin folding pathway. This chain is Tubulin-specific chaperone A (Tbca), found in Rattus norvegicus (Rat).